A 160-amino-acid chain; its full sequence is Monooxygenase AacuO (160 aa).

Belongs to the avfA family.

Its pathway is secondary metabolite biosynthesis. Functionally, monooxygenase; part of the gene cluster that mediates the biosynthesis of the tetrahydroxanthone dimer secalonic acid D. The pathway begins with the synthesis of atrochrysone thioester by the polyketide synthase AacuL. The atrochrysone carboxyl ACP thioesterase AacuM then breaks the thioester bond and releases the atrochrysone carboxylic acid from AacuL. Atrochrysone carboxylic acid is decarboxylated by the decarboxylase AacuI, and oxidized by the anthrone oxygenase AacuG to yield emodin. Emodin is then reduced to emodin hydroquinone by a yet unidentified oxidoreductase. A-ring reduction by the short chain dehydrogenase AacuN, dehydration by the scytalone dehydratase-like protein AacuK and probable spontaneous re-oxidation, results in overall deoxygenation to chrysophanol. Baeyer-Villiger oxidation by the Baeyer-Villiger monooxygenase (BVMO) AacuH then yields monodictyphenone. Monodictyphenone is transformed into compounds with the tetrahydroxanthone skeleton via methylesterification by the methyltransferase AacuQ, followed by the action of the flavin-dependent monooxygenase AacuC, the isomerase AacuP, and the short chain dehydrogenase/reductase AacuF or AacuD. AacuF and AacuD should accept the same compound as a substrate but perform the ketoreduction with a different stereoselectivity, thus yielding blennolides B and A, respectively. In the final step of the biosynthesis, the cytochrome P450 monooxygenase AacuE accepts blennolide B and/or blennolide A to conduct the dimerization reaction to furnish the tetrahydroxanthone dimers, secalonic acids D, B, and F. This chain is Monooxygenase AacuO, found in Aspergillus aculeatus (strain ATCC 16872 / CBS 172.66 / WB 5094).